The sequence spans 378 residues: Lipid-A-disaccharide synthase (378 aa).

The protein belongs to the LpxB family.

It catalyses the reaction a lipid X + a UDP-2-N,3-O-bis[(3R)-3-hydroxyacyl]-alpha-D-glucosamine = a lipid A disaccharide + UDP + H(+). Its pathway is bacterial outer membrane biogenesis; LPS lipid A biosynthesis. Condensation of UDP-2,3-diacylglucosamine and 2,3-diacylglucosamine-1-phosphate to form lipid A disaccharide, a precursor of lipid A, a phosphorylated glycolipid that anchors the lipopolysaccharide to the outer membrane of the cell. The protein is Lipid-A-disaccharide synthase of Pseudomonas aeruginosa (strain UCBPP-PA14).